A 1261-amino-acid chain; its full sequence is MKAADEPAYLTVGTDVSAKYRGAFCEAKIKTVKRLVKVKVLLKQDNTTQLVQDDQVKGPLRVGAIVETRTSDGSIQEAIISKLTDASWYTVVFDDGDERTLRRTSLCLKGERHFAESETLDQLPLTNPEHFGTPVIAKKTNRGRRSSLPITEDEKEEESSEEEDEDKRRLNDELLGKVVSVASTAESTGWYPALVVSPSCNDDVTVKKDQCLVRSFIDSKFYSIARKDIKELDILTLPESELCARPGLRRASVFLKGRIVPDNWKMDISEILESSSSDDEECPAEEHEEEKEKEAKKEEEELPEEELDPEERDNFLQQLYKFMEDRGTPINKPPVLGYKDLNLFKLFRLVYHQGGCGNIDSGAVWKQIYMDLGIPILNSAASYNVKTAYRKYLYGFEEYCRSANIQFRTIHHHEPKVKEEKKDFEDSMDEALKEAPEMPLLDVKSEPEENTDSNSESDREDTELKSPRGRRKIVRDANCIKKEIEEEKIEDKFLRDDLENKDAGDDDDDGDPAAKREHELLFGRKSTPKNKEKKIKKPEDSERDSDEEEEKSQEREETESRCDSEGEDEEDDTEPCLTGTKVKVKYGRGKTQKIYEASIKSTEMDDGEILYLVHYYGWNVRYDEWVKADRIIWPLDKGGPKKKQKKKVKNKEDSEKDEKRDEERQKSKRGRPPLKSTFSPNMPYSLSKTSNSEGKSDSCSSDSEADDQLEKSSGGEDLSPDVKEELEKNENAHDDKLDEENPKIVHISKENDRTQAQPSDTLTVEAGDSDQIVHIFGDKVDQVEEFKKQVEKSPKGKGRRSKTKDLSLELIKISPFGQEEAGSEAHGDVHSLEFSSLECKNFSSTEDDIDPYEKEKKLKRKILGQQSPEKKLRLDNGMEMTTGVSQERSDDGAGAEGMKGAHVEQHFETEGEGMPSLTAEPDQGLQELTSEKSDSPAEEEPVHTPLKEEEDAMPLIGPETLVCHEVDLDDLDEKDKTSIEDVVVEGSESNSLASVPPALPPVAQHNFSVASPLTLSQDESRSIKSESDITIEVDSIAEESQEGLCERESANGFEASVASGACSIIAHERESREKGQKRPSDGNSGLIAKKQKRTPKRTSAAAKTEKNGAGQSSDSEDLPAMDSSSNCTPVKRLTLPKSQKLPRSPARTSPHIKDAEKEKHREKHPNSSPRTYKWSFQLNELDNMNSTERISFLQEKLQEIRKYYMSLKSEVATIDRRRKRLKKKDREVSHAGASMSSASSDTGMSPSSSSPPQNVLAVECR.

The interval 4-121 (ADEPAYLTVG…RHFAESETLD (118 aa)) is DNA-binding. 3 disordered regions span residues 142 to 169 (RGRR…DKRR), 273 to 310 (ESSS…LDPE), and 435 to 470 (APEM…PRGR). Acidic residues-rich tracts occupy residues 151–165 (TEDE…EEDE) and 276–289 (SSDD…EHEE). Residues 290 to 299 (EKEKEAKKEE) are compositionally biased toward basic and acidic residues. Over residues 300–310 (EELPEEELDPE) the composition is skewed to acidic residues. One can recognise an ARID domain in the interval 309-401 (PEERDNFLQQ…YLYGFEEYCR (93 aa)). Lysine 481 participates in a covalent cross-link: Glycyl lysine isopeptide (Lys-Gly) (interchain with G-Cter in SUMO2). 3 disordered regions span residues 498–582 (LENK…GTKV), 633–768 (WPLD…EAGD), and 842–953 (FSST…EDAM). Over residues 512 to 522 (PAAKREHELLF) the composition is skewed to basic and acidic residues. The segment covering 526-536 (STPKNKEKKIK) has biased composition (basic residues). The segment covering 541–551 (SERDSDEEEEK) has biased composition (acidic residues). The span at 552–564 (SQEREETESRCDS) shows a compositional bias: basic and acidic residues. Positions 565 to 574 (EGEDEEDDTE) are enriched in acidic residues. Residues 579-631 (GTKVKVKYGRGKTQKIYEASIKSTEMDDGEILYLVHYYGWNVRYDEWVKADRI) form the Tudor-knot domain. A compositionally biased stretch (basic residues) spans 640-649 (PKKKQKKKVK). Residues 650-665 (NKEDSEKDEKRDEERQ) are compositionally biased toward basic and acidic residues. Residues 676–689 (STFSPNMPYSLSKT) are compositionally biased toward polar residues. Phosphoserine is present on serine 679. Positions 690 to 702 (SNSEGKSDSCSSD) are enriched in low complexity. Residues 708–753 (QLEKSSGGEDLSPDVKEELEKNENAHDDKLDEENPKIVHISKENDR) show a composition bias toward basic and acidic residues. Serine 719 is modified (phosphoserine). Residues lysine 723 and lysine 743 each participate in a glycyl lysine isopeptide (Lys-Gly) (interchain with G-Cter in SUMO2) cross-link. The residue at position 867 (serine 867) is a Phosphoserine. Composition is skewed to basic and acidic residues over residues 899 to 909 (KGAHVEQHFET) and 929 to 947 (TSEK…TPLK). The segment at 955 to 968 (LIGPETLVCHEVDL) is retinoblastoma protein binding. Basic and acidic residues predominate over residues 1067 to 1080 (HERESREKGQKRPS). Disordered regions lie at residues 1067-1173 (HERE…RTYK) and 1216-1261 (RRRK…VECR). Phosphoserine is present on residues serine 1113 and serine 1149. A compositionally biased stretch (low complexity) spans 1230–1252 (HAGASMSSASSDTGMSPSSSSPP).

In terms of assembly, identified in mSin3A corepressor complexes together with SIN3A, SIN3B, RBBP4, RBBP7, SAP30, BRMS1, HDAC1 and HDAC2. Interacts with BRMS1. Interacts with RB1. Interacts with ARID4B. Interacts with AR. In terms of tissue distribution, expressed in Sertoli cells of the testis.

The protein localises to the nucleus. DNA-binding protein which modulates activity of several transcription factors including RB1 (retinoblastoma-associated protein) and AR (androgen receptor). May function as part of an mSin3A repressor complex. Has no intrinsic transcriptional activity. Plays a role in the regulation of epigenetic modifications at the PWS/AS imprinting center near the SNRPN promoter, where it might function as part of a complex with RB1 and ARID4B. Involved in spermatogenesis, together with ARID4B, where it acts as a transcriptional coactivator for AR and enhances expression of genes required for sperm maturation. Regulates expression of the tight junction protein CLDN3 in the testis, which is important for integrity of the blood-testis barrier. Plays a role in myeloid homeostasis where it regulates the histone methylation state of bone marrow cells and expression of various genes involved in hematopoiesis. May function as a leukemia suppressor. The chain is AT-rich interactive domain-containing protein 4A from Mus musculus (Mouse).